The following is a 476-amino-acid chain: Argininosuccinate lyase (476 aa).

It belongs to the lyase 1 family. Argininosuccinate lyase subfamily.

The protein resides in the cytoplasm. It carries out the reaction 2-(N(omega)-L-arginino)succinate = fumarate + L-arginine. The protein operates within amino-acid biosynthesis; L-arginine biosynthesis; L-arginine from L-ornithine and carbamoyl phosphate: step 3/3. This chain is Argininosuccinate lyase, found in Gluconacetobacter diazotrophicus (strain ATCC 49037 / DSM 5601 / CCUG 37298 / CIP 103539 / LMG 7603 / PAl5).